The chain runs to 1097 residues: DNA-directed RNA polymerase subunit beta (1097 aa).

The tract at residues Asp-1073 to Asp-1097 is disordered. Over residues Arg-1077–Thr-1091 the composition is skewed to polar residues.

The protein belongs to the RNA polymerase beta chain family. As to quaternary structure, in cyanobacteria the RNAP catalytic core is composed of 2 alpha, 1 beta, 1 beta', 1 gamma and 1 omega subunit. When a sigma factor is associated with the core the holoenzyme is formed, which can initiate transcription.

The catalysed reaction is RNA(n) + a ribonucleoside 5'-triphosphate = RNA(n+1) + diphosphate. Its function is as follows. DNA-dependent RNA polymerase catalyzes the transcription of DNA into RNA using the four ribonucleoside triphosphates as substrates. This chain is DNA-directed RNA polymerase subunit beta, found in Prochlorococcus marinus (strain MIT 9312).